Consider the following 96-residue polypeptide: Large ribosomal subunit protein uL23 (96 aa).

It belongs to the universal ribosomal protein uL23 family. As to quaternary structure, part of the 50S ribosomal subunit. Contacts protein L29, and trigger factor when it is bound to the ribosome.

Its function is as follows. One of the early assembly proteins it binds 23S rRNA. One of the proteins that surrounds the polypeptide exit tunnel on the outside of the ribosome. Forms the main docking site for trigger factor binding to the ribosome. The chain is Large ribosomal subunit protein uL23 from Brevibacillus brevis (strain 47 / JCM 6285 / NBRC 100599).